Reading from the N-terminus, the 344-residue chain is MKFLDLAKVYIRSGAGGGGSVSFRREKYIEYGGPDGGDGGGGGNVYIEVVEGLNTLIDFRYQQHFFAKNGQPGMGKQRTGKDGADIVLRVPAGTEVLEEDQETLIADLEEVGQRICIAKGGNGGFGNLHFKSATNQAPRRANPGQEGVERTIWLRLKLIADVGLLGLPNAGKSTFLAATSNARPKIADYPFTTLVPNLGVVGVDGAEFVIADIPGLIEGASEGRGLGDTFLGHVERCAALLHLVDGTSEDVVGDYQTIIAELEAYGGELALKPRITALNKIDAIEPEELAKKRAALGKVAGNLMEMSGVARTGVTEVLRVLRARVDADRKAARDALEEPDRWRP.

In terms of domain architecture, Obg spans 1–159 (MKFLDLAKVY…RTIWLRLKLI (159 aa)). An OBG-type G domain is found at 160–326 (ADVGLLGLPN…VLRVLRARVD (167 aa)). GTP contacts are provided by residues 166–173 (GLPNAGKS), 191–195 (FTTLV), 212–215 (DIPG), 279–282 (NKID), and 307–309 (SGV). Residues S173 and T193 each coordinate Mg(2+).

This sequence belongs to the TRAFAC class OBG-HflX-like GTPase superfamily. OBG GTPase family. Monomer. Mg(2+) is required as a cofactor.

It localises to the cytoplasm. An essential GTPase which binds GTP, GDP and possibly (p)ppGpp with moderate affinity, with high nucleotide exchange rates and a fairly low GTP hydrolysis rate. Plays a role in control of the cell cycle, stress response, ribosome biogenesis and in those bacteria that undergo differentiation, in morphogenesis control. In Jannaschia sp. (strain CCS1), this protein is GTPase Obg.